The sequence spans 364 residues: Aminomethyltransferase (364 aa).

It belongs to the GcvT family. In terms of assembly, the glycine cleavage system is composed of four proteins: P, T, L and H.

It catalyses the reaction N(6)-[(R)-S(8)-aminomethyldihydrolipoyl]-L-lysyl-[protein] + (6S)-5,6,7,8-tetrahydrofolate = N(6)-[(R)-dihydrolipoyl]-L-lysyl-[protein] + (6R)-5,10-methylene-5,6,7,8-tetrahydrofolate + NH4(+). Its function is as follows. The glycine cleavage system catalyzes the degradation of glycine. The polypeptide is Aminomethyltransferase (Shewanella oneidensis (strain ATCC 700550 / JCM 31522 / CIP 106686 / LMG 19005 / NCIMB 14063 / MR-1)).